Reading from the N-terminus, the 328-residue chain is MKIFDYEDIQLVPNKCIVNSRSECDTTIQFGPRSFKLPVVPANMQTVMNETLAEWFAENDYFYIMHRFDEEGRIPFIKKMQEKGLFASISVGVKEREFGFVESLAAENVIPEYITIDIAHGHSDSVINMIKHIKKHIPEVFVIAGNVGTPEGVRELENAGADATKVGIGPGRVCITKIKTGFGTGGWQLSALNHCSKAARKPIIADGGIRTHGDIAKSIRFGASMVMVGSLFAAHEESPGETVELDGKMYKEYFGSASEFQKGEHKNVEGKKMFVEHKGSLFNTLTEMQQDLQSSISYAGGKDLNSLRKVDYVIVRNSIFNGDRDQNL.

Residue Cys174 is the Thioimidate intermediate of the active site. Position 203-226 (203-226) interacts with NADP(+); that stretch reads IIADGGIRTHGDIAKSIRFGASMV.

The protein belongs to the IMPDH/GMPR family. GuaC type 2 subfamily.

The enzyme catalyses IMP + NH4(+) + NADP(+) = GMP + NADPH + 2 H(+). In terms of biological role, catalyzes the irreversible NADPH-dependent deamination of GMP to IMP. It functions in the conversion of nucleobase, nucleoside and nucleotide derivatives of G to A nucleotides, and in maintaining the intracellular balance of A and G nucleotides. The protein is GMP reductase of Staphylococcus saprophyticus subsp. saprophyticus (strain ATCC 15305 / DSM 20229 / NCIMB 8711 / NCTC 7292 / S-41).